The chain runs to 310 residues: Deoxyribonuclease gamma (310 aa).

Positions 1-25 (MSLYPASPYLASLLLFILALHGALS) are cleaved as a signal peptide. The Bipartite nuclear localization signal motif lies at 40 to 56 (KKENHNAMDIIVKIIKR). Catalysis depends on residues Glu105 and His160. Cys199 and Cys236 are disulfide-bonded. Positions 289-310 (SRAFTNSRKSVSLKKKKKGSRS) are not required for free DNA-nuclease activity but required for activity towards liposome-coated DNA. Positions 301-307 (LKKKKKG) match the Nuclear localization signal motif.

It belongs to the DNase I family. Monomer. The cofactor is Ca(2+). Mg(2+) serves as cofactor. Seems to be synthesized as an inactive precursor protein and converted into an active mature enzyme by removal of the N-terminal precursor peptide during apoptosis. In terms of processing, poly-ADP-ribosylated by PARP1. ADP-ribosylation negatively regulates enzymatic activity during apoptosis. Detected at high levels in spleen, lymph nodes, thymus and liver. Observed also in kidney and testis, but not in brain or heart.

It is found in the nucleus. Its subcellular location is the secreted. With respect to regulation, inhibited by zinc. Functionally, has DNA hydrolytic activity. Is capable of both single- and double-stranded DNA cleavage, producing DNA fragments with 3'-OH ends. Can cleave chromatin to nucleosomal units and cleaves nucleosomal and liposome-coated DNA. Acts in internucleosomal DNA fragmentation (INDF) during apoptosis and necrosis. The role in apoptosis includes myogenic and neuronal differentiation, and BCR-mediated clonal deletion of self-reactive B cells. Is active on chromatin in apoptotic cell-derived membrane-coated microparticles and thus suppresses anti-DNA autoimmunity. Together with DNASE1, plays a key role in degrading neutrophil extracellular traps (NETs). NETs are mainly composed of DNA fibers and are released by neutrophils to bind pathogens during inflammation. Degradation of intravascular NETs by DNASE1 and DNASE1L3 is required to prevent formation of clots that obstruct blood vessels and cause organ damage following inflammation. The sequence is that of Deoxyribonuclease gamma (Dnase1l3) from Rattus norvegicus (Rat).